Here is a 508-residue protein sequence, read N- to C-terminus: Photosystem II CP47 reaction center protein (508 aa).

Transmembrane regions (helical) follow at residues 21-36, 101-115, 140-156, 203-218, 237-252, and 457-472; these read SVHI…WAGS, IVFS…IWHW, GIHL…FGAF, IAAG…FHLS, VLSS…AFVV, and TFAL…HGAR.

The protein belongs to the PsbB/PsbC family. PsbB subfamily. In terms of assembly, PSII is composed of 1 copy each of membrane proteins PsbA, PsbB, PsbC, PsbD, PsbE, PsbF, PsbH, PsbI, PsbJ, PsbK, PsbL, PsbM, PsbT, PsbX, PsbY, PsbZ, Psb30/Ycf12, at least 3 peripheral proteins of the oxygen-evolving complex and a large number of cofactors. It forms dimeric complexes. Requires Binds multiple chlorophylls. PSII binds additional chlorophylls, carotenoids and specific lipids. as cofactor.

Its subcellular location is the plastid. It localises to the chloroplast thylakoid membrane. Its function is as follows. One of the components of the core complex of photosystem II (PSII). It binds chlorophyll and helps catalyze the primary light-induced photochemical processes of PSII. PSII is a light-driven water:plastoquinone oxidoreductase, using light energy to abstract electrons from H(2)O, generating O(2) and a proton gradient subsequently used for ATP formation. This Oryza sativa subsp. indica (Rice) protein is Photosystem II CP47 reaction center protein.